Reading from the N-terminus, the 491-residue chain is Anthranilate synthase component 1 (491 aa).

Residues Ser-49 and 271 to 273 (PYL) contribute to the L-tryptophan site. 306–307 (GT) serves as a coordination point for chorismate. Mg(2+) is bound at residue Glu-333. Residues Tyr-421, Arg-441, 455 to 457 (GAG), and Gly-457 contribute to the chorismate site. Glu-470 lines the Mg(2+) pocket.

It belongs to the anthranilate synthase component I family. Heterotetramer consisting of two non-identical subunits: a beta subunit (TrpG) and a large alpha subunit (TrpE). It depends on Mg(2+) as a cofactor.

It carries out the reaction chorismate + L-glutamine = anthranilate + pyruvate + L-glutamate + H(+). It functions in the pathway amino-acid biosynthesis; L-tryptophan biosynthesis; L-tryptophan from chorismate: step 1/5. Feedback inhibited by tryptophan. Its function is as follows. Part of a heterotetrameric complex that catalyzes the two-step biosynthesis of anthranilate, an intermediate in the biosynthesis of L-tryptophan. In the first step, the glutamine-binding beta subunit (TrpG) of anthranilate synthase (AS) provides the glutamine amidotransferase activity which generates ammonia as a substrate that, along with chorismate, is used in the second step, catalyzed by the large alpha subunit of AS (TrpE) to produce anthranilate. In the absence of TrpG, TrpE can synthesize anthranilate directly from chorismate and high concentrations of ammonia. This Neisseria meningitidis serogroup B (strain ATCC BAA-335 / MC58) protein is Anthranilate synthase component 1 (trpE).